The sequence spans 433 residues: Cell adhesion molecule 2 (433 aa).

The signal sequence occupies residues M1–G24. Topologically, residues Q25–H365 are extracellular. Positions P27–S114 constitute an Ig-like V-type domain. Residues N31, N41, and N51 are each glycosylated (N-linked (GlcNAc...) asparagine). 3 disulfides stabilise this stretch: C44–C104, C146–C203, and C248–C296. Ig-like C2-type domains are found at residues P127–A217 and P227–I312. N-linked (GlcNAc...) asparagine glycans are attached at residues N287 and N291. A helical membrane pass occupies residues A366–I386. Topologically, residues G387–I433 are cytoplasmic.

This sequence belongs to the nectin family.

The protein localises to the membrane. The polypeptide is Cell adhesion molecule 2 (cadm2) (Xenopus tropicalis (Western clawed frog)).